We begin with the raw amino-acid sequence, 449 residues long: Histidinol dehydrogenase (449 aa).

Residues tyrosine 136, glutamine 204, and asparagine 232 each coordinate NAD(+). Substrate is bound by residues threonine 255, glutamine 277, and histidine 280. Residues glutamine 277 and histidine 280 each contribute to the Zn(2+) site. Catalysis depends on proton acceptor residues glutamate 346 and histidine 347. Histidine 347, aspartate 380, glutamate 434, and histidine 439 together coordinate substrate. A Zn(2+)-binding site is contributed by aspartate 380. Histidine 439 serves as a coordination point for Zn(2+).

The protein belongs to the histidinol dehydrogenase family. Requires Zn(2+) as cofactor.

The catalysed reaction is L-histidinol + 2 NAD(+) + H2O = L-histidine + 2 NADH + 3 H(+). It participates in amino-acid biosynthesis; L-histidine biosynthesis; L-histidine from 5-phospho-alpha-D-ribose 1-diphosphate: step 9/9. In terms of biological role, catalyzes the sequential NAD-dependent oxidations of L-histidinol to L-histidinaldehyde and then to L-histidine. This is Histidinol dehydrogenase (hisD) from Mycobacterium leprae (strain TN).